The sequence spans 415 residues: MSSLQPVRGTHDLIGETQLRHAHVVETARRIAGLYGFDEWATPIFEDTRVFARSLGDTSDVVSKEMYSFEDRGGESLTLRPEGTAGVCRALVTNGLTQSLPQKVFYAGPMFRYERPQKGRYRQFHQIGAELIGAAEPLADAEAIAMGRDVLKALGIADETILDLNTLGDTESRAAWRTALIGYFTECRDQLSDDSRARLERNPLRILDSKAPQDRALVADAPRIGAFLTPEAVAFWDGLRSALDLMGVPFRENPGIVRGLDYYGHTAFEFVTERLGAQGTVLAGGRYDGLVAEMGGPRTPAIGWAGGIERLSMLLDATPAAPRPVAVVPMGEGAMGAAILLLQALRAGGVRAEIAYRGNTKKRLERANRIGATHAVLIGEDEVARGVAQVKALDDGSQAELALDAVTPYLAGLAG.

Belongs to the class-II aminoacyl-tRNA synthetase family. In terms of assembly, homodimer.

It is found in the cytoplasm. It carries out the reaction tRNA(His) + L-histidine + ATP = L-histidyl-tRNA(His) + AMP + diphosphate + H(+). This Gluconacetobacter diazotrophicus (strain ATCC 49037 / DSM 5601 / CCUG 37298 / CIP 103539 / LMG 7603 / PAl5) protein is Histidine--tRNA ligase.